Here is a 303-residue protein sequence, read N- to C-terminus: MSTVISLPKVNGEYRKNFKLSHLTWFKVGGISQVFYKPKDEHDLSYFLANLQSNIKITVLGAGSNLLIRDNGIDGVTIKLGRSFNEINFVKNNHYNIISVGAGTLNYDVAKFCLQHNLGGLEFLVGIPGTIGGGIAMNAGAYGQEFKDVVYSVEALDRSGNKHIFLSKDLNFEYRQCIVNGFLIFTKTNLICYNDSKPSISQKLQKIQTVRKLTQPINQKTAGSAFRNTNNYKAWQLIDKVGLRGHSIGGAQVSNLHCNFLINNGNATASDIENLGELIRKKVFDHTGITLEWEIKIVGKKSL.

The FAD-binding PCMH-type domain maps to 27–217 (KVGGISQVFY…QTVRKLTQPI (191 aa)). R175 is an active-site residue. Residue S224 is the Proton donor of the active site. E294 is a catalytic residue.

This sequence belongs to the MurB family. The cofactor is FAD.

Its subcellular location is the cytoplasm. It catalyses the reaction UDP-N-acetyl-alpha-D-muramate + NADP(+) = UDP-N-acetyl-3-O-(1-carboxyvinyl)-alpha-D-glucosamine + NADPH + H(+). Its pathway is cell wall biogenesis; peptidoglycan biosynthesis. Functionally, cell wall formation. This is UDP-N-acetylenolpyruvoylglucosamine reductase from Orientia tsutsugamushi (strain Ikeda) (Rickettsia tsutsugamushi).